The following is a 270-amino-acid chain: ATP synthase subunit b 1 (270 aa).

The chain crosses the membrane as a helical span at residues Leu2–Leu22.

It belongs to the ATPase B chain family. In terms of assembly, F-type ATPases have 2 components, F(1) - the catalytic core - and F(0) - the membrane proton channel. F(1) has five subunits: alpha(3), beta(3), gamma(1), delta(1), epsilon(1). F(0) has three main subunits: a(1), b(2) and c(10-14). The alpha and beta chains form an alternating ring which encloses part of the gamma chain. F(1) is attached to F(0) by a central stalk formed by the gamma and epsilon chains, while a peripheral stalk is formed by the delta and b chains.

The protein resides in the cell inner membrane. Its function is as follows. F(1)F(0) ATP synthase produces ATP from ADP in the presence of a proton or sodium gradient. F-type ATPases consist of two structural domains, F(1) containing the extramembraneous catalytic core and F(0) containing the membrane proton channel, linked together by a central stalk and a peripheral stalk. During catalysis, ATP synthesis in the catalytic domain of F(1) is coupled via a rotary mechanism of the central stalk subunits to proton translocation. Component of the F(0) channel, it forms part of the peripheral stalk, linking F(1) to F(0). This is ATP synthase subunit b 1 from Marinomonas sp. (strain MWYL1).